The chain runs to 663 residues: UvrABC system protein B (663 aa).

In terms of domain architecture, Helicase ATP-binding spans 31–271; that stretch reads DNIEGGEKAQ…EQSISKIQAE (241 aa). Residue 44 to 51 coordinates ATP; that stretch reads GATGTGKT. The Beta-hairpin motif lies at 97–120; sequence YYDYYQPEAYVPSSDTYIEKDSSV. The 167-residue stretch at 435-601 folds into the Helicase C-terminal domain; that stretch reads QMDDLLGEIN…TIKKDIRDLI (167 aa). Positions 627-662 constitute a UVR domain; the sequence is QEAIKQLQKNMQEAAELLDFELAAQLRDLILELKAM.

The protein belongs to the UvrB family. Forms a heterotetramer with UvrA during the search for lesions. Interacts with UvrC in an incision complex.

The protein resides in the cytoplasm. In terms of biological role, the UvrABC repair system catalyzes the recognition and processing of DNA lesions. A damage recognition complex composed of 2 UvrA and 2 UvrB subunits scans DNA for abnormalities. Upon binding of the UvrA(2)B(2) complex to a putative damaged site, the DNA wraps around one UvrB monomer. DNA wrap is dependent on ATP binding by UvrB and probably causes local melting of the DNA helix, facilitating insertion of UvrB beta-hairpin between the DNA strands. Then UvrB probes one DNA strand for the presence of a lesion. If a lesion is found the UvrA subunits dissociate and the UvrB-DNA preincision complex is formed. This complex is subsequently bound by UvrC and the second UvrB is released. If no lesion is found, the DNA wraps around the other UvrB subunit that will check the other stand for damage. The sequence is that of UvrABC system protein B from Streptococcus equi subsp. zooepidemicus (strain H70).